Reading from the N-terminus, the 184-residue chain is NADH-quinone oxidoreductase subunit B (184 aa).

Residues Cys-37, Cys-38, Cys-103, and Cys-132 each contribute to the [4Fe-4S] cluster site.

Belongs to the complex I 20 kDa subunit family. In terms of assembly, NDH-1 is composed of 14 different subunits. Subunits NuoB, C, D, E, F, and G constitute the peripheral sector of the complex. Requires [4Fe-4S] cluster as cofactor.

The protein localises to the cell membrane. It catalyses the reaction a quinone + NADH + 5 H(+)(in) = a quinol + NAD(+) + 4 H(+)(out). Functionally, NDH-1 shuttles electrons from NADH, via FMN and iron-sulfur (Fe-S) centers, to quinones in the respiratory chain. The immediate electron acceptor for the enzyme in this species is believed to be a menaquinone. Couples the redox reaction to proton translocation (for every two electrons transferred, four hydrogen ions are translocated across the cytoplasmic membrane), and thus conserves the redox energy in a proton gradient. This is NADH-quinone oxidoreductase subunit B from Rhodococcus jostii (strain RHA1).